The following is a 259-amino-acid chain: DNA-directed RNA polymerase 30 kDa polypeptide (259 aa).

The segment at 155–195 (YNTPCPNCKSRNTTPMMIQTRAADEPPLVRHACRDCKQHFK) adopts a TFIIS-type zinc-finger fold. The Zn(2+) site is built by C159, C162, C187, and C190. A disordered region spans residues 214–259 (ENKEITEILPDNNPSPPESPEPASPIDDGLIRSTFDRNDEPPEDDE). Residues 226–236 (NPSPPESPEPA) are compositionally biased toward pro residues.

This sequence belongs to the poxviridae DNA-directed RNA polymerase 30 kDa subunit family. As to quaternary structure, the DNA-dependent RNA polymerase (vRNAP) consists of eight subunits encoded by early viral genes and termed according to their apparent molecular masses Rpo147, Rpo132, Rpo35, Rpo30, Rpo22, Rpo19, Rpo18, and Rpo7. The same holoenzyme, with the addition of the transcription-specificity factor RAP94, is used for early gene expression.

It is found in the virion. The protein resides in the host cytoplasm. It catalyses the reaction RNA(n) + a ribonucleoside 5'-triphosphate = RNA(n+1) + diphosphate. Functionally, part of the DNA-dependent RNA polymerase which catalyzes the transcription of viral DNA into RNA using the four ribonucleoside triphosphates as substrates. Responsible for the transcription of early, intermediate and late genes. DNA-dependent RNA polymerase associates with the early transcription factor (ETF), itself composed of OPG118/D6 and OPG134/A8, thereby allowing the early genes transcription. Late transcription, and probably also intermediate transcription, require newly synthesized RNA polymerase. The chain is DNA-directed RNA polymerase 30 kDa polypeptide (OPG066) from Homo sapiens (Human).